The chain runs to 196 residues: MVKSFYGYVRDAWKNPDETYVNELRWERLQVWRKQGSVTRIERPTRIDRARSLGYKAKQGIVVVRVNVRRGGLGHVRPNRGRRTQKMGKNKVSGGMSIQRIAEVRADRRYPNLEVLNSYWVGEDGKHKWFEVILVDPHHPVIKSDKNLNWVCDPSSRGRATRGKTSAGRKGRGMATRGKGTEKTRPSIRAYKSRGK.

The disordered stretch occupies residues 153 to 196; the sequence is DPSSRGRATRGKTSAGRKGRGMATRGKGTEKTRPSIRAYKSRGK. Basic residues predominate over residues 159–172; it reads RATRGKTSAGRKGR.

This sequence belongs to the eukaryotic ribosomal protein eL15 family.

The protein is Large ribosomal subunit protein eL15 of Methanosarcina acetivorans (strain ATCC 35395 / DSM 2834 / JCM 12185 / C2A).